The chain runs to 696 residues: SLIT and NTRK-like protein 1 (696 aa).

Positions 1–17 (MLLWILLLETSLCFAAG) are cleaved as a signal peptide. One can recognise an LRRNT 1 domain in the interval 18–57 (NVTGDVCKEKICSCNEIEGDLHVDCEKKGFTSLQRFTAPT). Topologically, residues 18 to 622 (NVTGDVCKEK…SRVSISVLVP (605 aa)) are extracellular. 6 LRR repeats span residues 59–80 (QFYHLFLHGNSLTRLFPNEFAN), 83–104 (NAVSLHMENNGLHEIVPGAFLG), 106–128 (QLVKRLHINNNKIKSFRKQTFLG), 131–152 (DLEYLQADFNLLRDIDPGAFQD), 155–176 (KLEVLILNDNLISTLPANVFQY), and 178–199 (PITHLDLRGNRLKTLPYEEVLE). An LRRCT 1 domain is found at 212-263 (NPWDCTCDLLSLKEWLENIPKNALIGRVVCEAPTRLQGKDLNETTEQDLCPL). Residues 265 to 314 (NRVDSSLPAPPAQEETFAPGPLPTPFKTNGQEDHATPGSAPNGGTKIPGN) form a disordered region. The LRRNT 2 domain occupies 332–373 (NKPLANSLPCPGGCSCDHIPGSGLKMNCNNRNVSSLADLKPK). 6 LRR repeats span residues 376–397 (NVQELFLRDNKIHSIRKSHFVD), 400–421 (NLILLDLGNNNIATVENNTFKN), 424–445 (DLRWLYMDSNYLDTLSREKFAG), 448–469 (NLEYLNVEYNAIQLILPGTFNA), 472–493 (KLRILILNNNLLRSLPVDVFAG), and 495–516 (SLSKLSLHNNYFMYLPVAGVLD). An LRRCT 2 domain is found at 529–580 (NPWECSCTIVPFKQWAERLGSEVLMSDLKCETPVNFFRKDFMLLSNDEICPQ). A helical membrane pass occupies residues 623–643 (GLLLVFVTSAFTVVGMLVFIL). At 644–696 (RNRKRSKRRDANSSASEINSLQTVCDSSYWHNGPYNADGAHRVYDCGSHSLSD) the chain is on the cytoplasmic side. Phosphoserine; by CK2 is present on Ser695.

This sequence belongs to the SLITRK family. Can form homodimers; homodimerization requires repeat LRR 2. Interacts with YWHAB, YWHAE, YWHAG, YWHAH, SFN, YWHAQ and YWHAZ. Undergoes proteolytic cleavage that results in shedding of the ectodomain and cleavage of the C-terminal cytoplasmic tail. Glycosylated. Phosphorylation at Ser-695 is necessary for proper function in promoting neurite outgrowth. Expressed predominantly in the frontal lobe of the cerebral cortex of the brain. Also expressed in some astrocytic brain tumors such as astrocytomas, oligodendrogliomas, glioblastomas, gangliogliomas and primitive neuroectodermal tumors.

It is found in the membrane. Its subcellular location is the secreted. The protein localises to the synapse. Functionally, it is involved in synaptogenesis and promotes excitatory synapse differentiation. Enhances neuronal dendrite outgrowth. The sequence is that of SLIT and NTRK-like protein 1 (SLITRK1) from Homo sapiens (Human).